Reading from the N-terminus, the 501-residue chain is Pentatricopeptide repeat-containing protein At4g16470 (501 aa).

PPR repeat units lie at residues 107–141 (EPET…GFAL), 142–172 (NEYL…LKIR), 173–207 (DLIP…RIVP), 208–242 (DQYT…CIKS), 243–273 (NIIV…LSTR), 274–308 (NVIT…GCRP), 309–344 (NPVT…GIEP), and 345–379 (EGQH…EHPP). Residues 380–455 (VWGSLLGACR…DPGYSQIELQ (76 aa)) form a type E motif region. Positions 456–486 (GEVHRFMKDDTSHRLSEKIYKKVHEMTSFFM) are type E(+) motif.

It belongs to the PPR family. PCMP-E subfamily.

This Arabidopsis thaliana (Mouse-ear cress) protein is Pentatricopeptide repeat-containing protein At4g16470 (PCMP-E12).